A 551-amino-acid chain; its full sequence is mRNA cap guanine-N(7) methyltransferase (551 aa).

Residues 1–10 (MENRSSSGTP) show a composition bias toward polar residues. A disordered region spans residues 1 to 152 (MENRSSSGTP…DRETLRRRQE (152 aa)). 2 stretches are compositionally biased toward basic and acidic residues: residues 48–76 (VTEE…EERH) and 141–152 (LVDRETLRRRQE). The region spanning 194 to 551 (SKIKGLRSFN…FYHAFCFYKV (358 aa)) is the mRNA cap 0 methyltransferase domain. Position 203–204 (203–204 (NN)) interacts with mRNA. S-adenosyl-L-methionine is bound by residues Lys-207, Gly-250, Asp-274, Asp-312, 355 to 357 (MFA), and Tyr-360. Positions 407 to 430 (KAREEQEKKEKSDEAPEDGEVEED) are disordered. Basic and acidic residues predominate over residues 408–420 (AREEQEKKEKSDE). A compositionally biased stretch (acidic residues) spans 421–430 (APEDGEVEED).

This sequence belongs to the class I-like SAM-binding methyltransferase superfamily. mRNA cap 0 methyltransferase family.

It localises to the nucleus. It carries out the reaction a 5'-end (5'-triphosphoguanosine)-ribonucleoside in mRNA + S-adenosyl-L-methionine = a 5'-end (N(7)-methyl 5'-triphosphoguanosine)-ribonucleoside in mRNA + S-adenosyl-L-homocysteine. Functionally, responsible for methylating the 5'-cap structure of mRNAs. The polypeptide is mRNA cap guanine-N(7) methyltransferase (abd1) (Aspergillus clavatus (strain ATCC 1007 / CBS 513.65 / DSM 816 / NCTC 3887 / NRRL 1 / QM 1276 / 107)).